The following is a 369-amino-acid chain: MSASLPLVFDAPRRGMPPRHLADLSADERRAAVTELGEKPFRARQLAHHYFGRLNADVESMTDIPAGSRAKLGADLLPTLLTPVRNLDTDEGTTRKTLWRAHDGTLLESVLMRYPDRATVCISSQAGCGMACPFCATGQGGLQRNLSTAEIVDQVRSAAAMMRDGEVPGGPGRLSNVVFMGMGEPLANYKRVINAVHRICDPAPEGLGLSQRSVTVSTVGLVPAIRRMTAEDLHVTLAVSLHTPDDELRDTLVPVNNRWKVEEVLQAARGYADHTGRRVSIEYALIRDINDQPWRADLLGKLLHKHLGQFVHVNLIPLNPTPGSKWDASPKPVEREFVRRVREAGVPCTVRDTRGQEIAAACGQLAAEE.

Glutamate 108 (proton acceptor) is an active-site residue. Residues 114–357 (YPDRATVCIS…CTVRDTRGQE (244 aa)) form the Radical SAM core domain. The cysteines at positions 121 and 362 are disulfide-linked. Residues cysteine 128, cysteine 132, and cysteine 135 each contribute to the [4Fe-4S] cluster site. S-adenosyl-L-methionine is bound by residues 183 to 184 (GE), serine 217, 240 to 242 (SLH), and asparagine 319. The S-methylcysteine intermediate role is filled by cysteine 362.

This sequence belongs to the radical SAM superfamily. RlmN family. [4Fe-4S] cluster is required as a cofactor.

It localises to the cytoplasm. The enzyme catalyses adenosine(2503) in 23S rRNA + 2 reduced [2Fe-2S]-[ferredoxin] + 2 S-adenosyl-L-methionine = 2-methyladenosine(2503) in 23S rRNA + 5'-deoxyadenosine + L-methionine + 2 oxidized [2Fe-2S]-[ferredoxin] + S-adenosyl-L-homocysteine. It carries out the reaction adenosine(37) in tRNA + 2 reduced [2Fe-2S]-[ferredoxin] + 2 S-adenosyl-L-methionine = 2-methyladenosine(37) in tRNA + 5'-deoxyadenosine + L-methionine + 2 oxidized [2Fe-2S]-[ferredoxin] + S-adenosyl-L-homocysteine. Its function is as follows. Specifically methylates position 2 of adenine 2503 in 23S rRNA and position 2 of adenine 37 in tRNAs. The sequence is that of Probable dual-specificity RNA methyltransferase RlmN from Saccharopolyspora erythraea (strain ATCC 11635 / DSM 40517 / JCM 4748 / NBRC 13426 / NCIMB 8594 / NRRL 2338).